A 346-amino-acid chain; its full sequence is Annexin A1 (346 aa).

S5 is modified (phosphoserine; by TRPM7). Q19 is covalently cross-linked (Isoglutamyl lysine isopeptide (Gln-Lys) (interchain with K-?)). Position 21 is a phosphotyrosine; by EGFR (Y21). S34 and S37 each carry phosphoserine. 4 Annexin repeats span residues 42–113 (FNPS…ALLK), 114–185 (TPAR…SLAK), 197–269 (DLAD…AIVK), and 273–344 (SKPM…ALCG). K58 is subject to N6-acetyllysine. Residues G59, V60, E62, K97, L100, E105, M127, G129, G131, T132, and E134 each contribute to the Ca(2+) site. Residue T136 is modified to Phosphothreonine. Residues D171, G210, and R213 each coordinate Ca(2+). Residue K214 forms a Glycyl lysine isopeptide (Lys-Gly) (interchain with G-Cter in SUMO1); alternate linkage. A Glycyl lysine isopeptide (Lys-Gly) (interchain with G-Cter in SUMO2); alternate cross-link involves residue K214. Positions 215, 253, 255, and 256 each coordinate Ca(2+). K257 is covalently cross-linked (Glycyl lysine isopeptide (Lys-Gly) (interchain with G-Cter in SUMO1)). E261, M286, G288, and G290 together coordinate Ca(2+). K312 is modified (N6-acetyllysine). An intrachain disulfide couples C324 to C343. The Ca(2+) site is built by L328, E330, and T331. K332 participates in a covalent cross-link: Glycyl lysine isopeptide (Lys-Gly) (interchain with G-Cter in SUMO1). Ca(2+) is bound at residue E336.

It belongs to the annexin family. In terms of assembly, homodimer; non-covalently linked. Homodimer; linked by transglutamylation. Homodimers linked by transglutamylation are observed in placenta, but not in other tissues. Interacts with S100A11. Heterotetramer, formed by two molecules each of S100A11 and ANXA1. Interacts with DYSF. Interacts with EGFR. Phosphorylated by protein kinase C, EGFR and TRPM7. Phosphorylated in response to EGF treatment. Post-translationally, sumoylated. In terms of processing, proteolytically cleaved by cathepsin CTSG to release the active N-terminal peptide Ac2-26.

The protein resides in the nucleus. Its subcellular location is the cytoplasm. The protein localises to the cell projection. It is found in the cilium. It localises to the basolateral cell membrane. The protein resides in the lateral cell membrane. Its subcellular location is the cell membrane. The protein localises to the apical cell membrane. It is found in the membrane. It localises to the early endosome. The protein resides in the cytoplasmic vesicle membrane. Its subcellular location is the endosome membrane. The protein localises to the secreted. It is found in the extracellular space. It localises to the extracellular exosome. The protein resides in the cytoplasmic vesicle. Its subcellular location is the secretory vesicle lumen. The protein localises to the phagocytic cup. Plays important roles in the innate immune response as effector of glucocorticoid-mediated responses and regulator of the inflammatory process. Has anti-inflammatory activity. Plays a role in glucocorticoid-mediated down-regulation of the early phase of the inflammatory response. Contributes to the adaptive immune response by enhancing signaling cascades that are triggered by T-cell activation, regulates differentiation and proliferation of activated T-cells. Promotes the differentiation of T-cells into Th1 cells and negatively regulates differentiation into Th2 cells. Has no effect on unstimulated T-cells. Negatively regulates hormone exocytosis via activation of the formyl peptide receptors and reorganization of the actin cytoskeleton. Has high affinity for Ca(2+) and can bind up to eight Ca(2+) ions. Displays Ca(2+)-dependent binding to phospholipid membranes. Plays a role in the formation of phagocytic cups and phagosomes. Plays a role in phagocytosis by mediating the Ca(2+)-dependent interaction between phagosomes and the actin cytoskeleton. Its function is as follows. Functions at least in part by activating the formyl peptide receptors and downstream signaling cascades. Promotes chemotaxis of granulocytes and monocytes via activation of the formyl peptide receptors. Promotes rearrangement of the actin cytoskeleton, cell polarization and cell migration. Promotes resolution of inflammation and wound healing. Acts via neutrophil N-formyl peptide receptors to enhance the release of CXCL2. The sequence is that of Annexin A1 (ANXA1) from Equus caballus (Horse).